Consider the following 329-residue polypeptide: MTVTIYDVAREARVSMATVSRVVNGNQNVKAETKNKVNEVIKRLNYRPNAVARGLASKKTTTVGVIIPDISNIYYSQLARGLEDIAIMYKYHSIISNSDNDPEKEKEIFNNLLSKQVDGIIFLGGTITEEMKELINQSSVPVVVSGTNGKDAHIASVNIDFTEAAKEITGKLIEKGAKSFALVGGEHSKKAQEDVLAGLTEVLNKNSLQLGDTLNCSGAESYKEGVKAFAKMKGNLPDAILCISDEEAIGIMHSAMDAGIKVPEELQIISFNNTRLVEMVRPQLSSVIQPLYDIGAVGMRLLTKYMNDEKIEEPNVVLPHRIEYRGTTK.

Residues 1-57 form the HTH lacI-type domain; the sequence is MTVTIYDVAREARVSMATVSRVVNGNQNVKAETKNKVNEVIKRLNYRPNAVARGLAS. Positions 5–24 form a DNA-binding region, H-T-H motif; that stretch reads IYDVAREARVSMATVSRVVN.

In terms of biological role, global transcriptional regulator of carbon catabolite repression (CCR) and carbon catabolite activation (CCA), which ensures optimal energy usage under diverse conditions. The protein is Catabolite control protein A (ccpA) of Staphylococcus aureus (strain MRSA252).